Reading from the N-terminus, the 194-residue chain is Molybdenum cofactor guanylyltransferase (194 aa).

GTP is bound by residues 12–14 (LAG), K25, N53, D71, and D101. D101 provides a ligand contact to Mg(2+).

Belongs to the MobA family. In terms of assembly, monomer. Requires Mg(2+) as cofactor.

Its subcellular location is the cytoplasm. The enzyme catalyses Mo-molybdopterin + GTP + H(+) = Mo-molybdopterin guanine dinucleotide + diphosphate. Transfers a GMP moiety from GTP to Mo-molybdopterin (Mo-MPT) cofactor (Moco or molybdenum cofactor) to form Mo-molybdopterin guanine dinucleotide (Mo-MGD) cofactor. The protein is Molybdenum cofactor guanylyltransferase of Escherichia coli O6:H1 (strain CFT073 / ATCC 700928 / UPEC).